A 117-amino-acid chain; its full sequence is Large ribosomal subunit protein bL20 (117 aa).

This sequence belongs to the bacterial ribosomal protein bL20 family.

Binds directly to 23S ribosomal RNA and is necessary for the in vitro assembly process of the 50S ribosomal subunit. It is not involved in the protein synthesizing functions of that subunit. The sequence is that of Large ribosomal subunit protein bL20 from Geobacter sulfurreducens (strain ATCC 51573 / DSM 12127 / PCA).